The chain runs to 159 residues: Ribosomal RNA large subunit methyltransferase H (159 aa).

Leu-76 and Gly-108 together coordinate S-adenosyl-L-methionine.

The protein belongs to the RNA methyltransferase RlmH family. In terms of assembly, homodimer.

The protein resides in the cytoplasm. It catalyses the reaction pseudouridine(1915) in 23S rRNA + S-adenosyl-L-methionine = N(3)-methylpseudouridine(1915) in 23S rRNA + S-adenosyl-L-homocysteine + H(+). Functionally, specifically methylates the pseudouridine at position 1915 (m3Psi1915) in 23S rRNA. The polypeptide is Ribosomal RNA large subunit methyltransferase H (Lactiplantibacillus plantarum (strain ATCC BAA-793 / NCIMB 8826 / WCFS1) (Lactobacillus plantarum)).